We begin with the raw amino-acid sequence, 427 residues long: Aspartate aminotransferase, mitochondrial (427 aa).

The transit peptide at 1–26 directs the protein to the mitochondrion; the sequence is MALLKSRLLVGVARCQPCLAAVQGRA. Residues glycine 62, tryptophan 159, and asparagine 212 each contribute to the substrate site. Lysine 276 carries the post-translational modification N6-(pyridoxal phosphate)lysine. Residue arginine 404 participates in substrate binding.

It belongs to the class-I pyridoxal-phosphate-dependent aminotransferase family. As to quaternary structure, homodimer. Pyridoxal 5'-phosphate is required as a cofactor.

Its subcellular location is the mitochondrion matrix. The catalysed reaction is L-aspartate + 2-oxoglutarate = oxaloacetate + L-glutamate. The enzyme catalyses L-kynurenine + 2-oxoglutarate = kynurenate + L-glutamate + H2O. Its function is as follows. Catalyzes the irreversible transamination of the L-tryptophan metabolite L-kynurenine to form kynurenic acid (KA). As a member of the malate-aspartate shuttle, it has a key role in the intracellular NAD(H) redox balance. Is important for metabolite exchange between mitochondria and cytosol, and for amino acid metabolism. This Xenopus tropicalis (Western clawed frog) protein is Aspartate aminotransferase, mitochondrial (got2).